The primary structure comprises 131 residues: MSWQVYVDEHLMCEIEGNHLTSAAIIGQDGSVWAQSQNFPQLKPEEVAGIVGDFADPGTLAPTGLYIGGTKYMVIQGEPGAVIRGKKGPGGATVKKTGMALVIGIYDEPMTPGQCNMIVERLGDYLIDQGL.

The protein belongs to the profilin family. Occurs in many kinds of cells as a complex with monomeric actin in a 1:1 ratio.

The protein resides in the cytoplasm. Its subcellular location is the cytoskeleton. Its function is as follows. Binds to actin and affects the structure of the cytoskeleton. At high concentrations, profilin prevents the polymerization of actin, whereas it enhances it at low concentrations. By binding to PIP2, it inhibits the formation of IP3 and DG. This Cucumis melo (Muskmelon) protein is Profilin.